The sequence spans 221 residues: Octanoyltransferase (221 aa).

The 189-residue stretch at 14–202 folds into the BPL/LPL catalytic domain; the sequence is GVRPDTLWFL…MLGARNAPHP (189 aa). Residues 54 to 61, 128 to 130, and 141 to 143 contribute to the substrate site; these read RGGLLTYH, SIG, and GFA. Cys159 acts as the Acyl-thioester intermediate in catalysis. The tract at residues 197–221 is disordered; it reads RNAPHPPAPNLSSGDLGTGTRAGRT.

This sequence belongs to the LipB family.

It is found in the cytoplasm. The catalysed reaction is octanoyl-[ACP] + L-lysyl-[protein] = N(6)-octanoyl-L-lysyl-[protein] + holo-[ACP] + H(+). Its pathway is protein modification; protein lipoylation via endogenous pathway; protein N(6)-(lipoyl)lysine from octanoyl-[acyl-carrier-protein]: step 1/2. Catalyzes the transfer of endogenously produced octanoic acid from octanoyl-acyl-carrier-protein onto the lipoyl domains of lipoate-dependent enzymes. Lipoyl-ACP can also act as a substrate although octanoyl-ACP is likely to be the physiological substrate. This Frankia casuarinae (strain DSM 45818 / CECT 9043 / HFP020203 / CcI3) protein is Octanoyltransferase.